Reading from the N-terminus, the 234-residue chain is MITIRIDSLIELMDRVAPPELALPGDRIGYHGPEIEVEAVLVLMDYLEDVAVDGYDLLVLHHPPEVEPPIPYLTVHSNWDVADGGACDALADALGLDVESFLDPDTGVDRICRADLSLEELLERTGVLNPETLRVVNPREYVDRVAVVSGFGLSDKSLIMRAWSEGVSAYLSGDLTHGPAILGRNMDLTLIDAGHHATEMPGLHRLREVIEDFGVMAELLDTGTPWSEYRAAYI.

Positions 61, 62, 80, 195, and 199 each coordinate a divalent metal cation.

The protein belongs to the GTP cyclohydrolase I type 2/NIF3 family. Homohexamer.

This is GTP cyclohydrolase 1 type 2 homolog from Methanothermobacter thermautotrophicus (strain ATCC 29096 / DSM 1053 / JCM 10044 / NBRC 100330 / Delta H) (Methanobacterium thermoautotrophicum).